Here is a 389-residue protein sequence, read N- to C-terminus: Chalcone synthase 1 (389 aa).

Residue C164 is part of the active site.

It belongs to the thiolase-like superfamily. Chalcone/stilbene synthases family.

The catalysed reaction is (E)-4-coumaroyl-CoA + 3 malonyl-CoA + 3 H(+) = 2',4,4',6'-tetrahydroxychalcone + 3 CO2 + 4 CoA. It functions in the pathway secondary metabolite biosynthesis; flavonoid biosynthesis. The primary product of this enzyme is 4,2',4',6'-tetrahydroxychalcone (also termed naringenin-chalcone or chalcone) which can under specific conditions spontaneously isomerize into naringenin. This is Chalcone synthase 1 (CHS1) from Solanum lycopersicum (Tomato).